An 859-amino-acid chain; its full sequence is Pre-mRNA-splicing factor SYF1 (859 aa).

HAT repeat units follow at residues 17–49, 52–84, 88–108, 123–157, 177–219, 238–271, 427–459, 461–482, 520–554, 599–633, 639–675, 685–718, 720–754, and 756–790; these read NIRN…YWKE, RTDK…WEST, VETS…VRDC, YDLA…FVEE, DEAE…ERYL, RDNI…FELN, VYSE…LYWR, NAIS…PYIE, ILLE…YLEA, YEVM…VATS, LSPE…FEER, EILR…KAES, LGPS…FESS, and GETI…FELK.

This sequence belongs to the crooked-neck family. As to quaternary structure, belongs to the NTC complex (or PRP19-associated complex), composed of at least CEF1, CLF1, ISY1, NTC20, SNT309, SYF1, SYF2, and PRP19. The NTC complex associates with the spliceosome after the release of the U1 and U4 snRNAs and forms the CWC spliceosome subcomplex (or CEF1-associated complex) reminiscent of a late-stage spliceosome composed also of the U2, U5 and U6 snRNAs and at least BUD13, BUD31, BRR2, CDC40, CUS1, CWC2, CWC15, CWC21, CWC22, CWC23, CWC24, CWC25, CWC27, ECM2, HSH155, IST3, LEA1, MSL1, PRP8, PRP9, PRP11, PRP21, PRP22, PRP45, PRP46, SLU7, SMB1, SMD1, SMD2, SMD3, SMX2, SMX3, SNU114, SPP2, RSE1 and YJU2. Interacts with CEF1, CLF1, ISY1, NTC20, PRP22, PRP46 and SYF2.

Its subcellular location is the nucleus. Involved in pre-mRNA splicing and cell cycle control. As a component of the NTC complex (or PRP19-associated complex), associates to the spliceosome to mediate conformational rearrangement or to stabilize the structure of the spliceosome after U4 snRNA dissociation, which leads to spliceosome maturation. This is Pre-mRNA-splicing factor SYF1 (SYF1) from Saccharomyces cerevisiae (strain ATCC 204508 / S288c) (Baker's yeast).